The following is a 294-amino-acid chain: Protein farnesyltransferase/geranylgeranyltransferase type-1 subunit alpha (294 aa).

PFTA repeat units follow at residues 57-91 (YSLR…HTPS), 92-125 (YIDN…SLTK), 126-160 (NYER…NFND), 161-194 (YSQE…ETSK), and 199-233 (SLEE…KSGP).

Belongs to the protein prenyltransferase subunit alpha family. As to quaternary structure, heterodimer of an alpha(cwp1) and a beta(cpp1 or cwg2) subunit. Mg(2+) is required as a cofactor.

The catalysed reaction is L-cysteinyl-[protein] + (2E,6E)-farnesyl diphosphate = S-(2E,6E)-farnesyl-L-cysteinyl-[protein] + diphosphate. It carries out the reaction geranylgeranyl diphosphate + L-cysteinyl-[protein] = S-geranylgeranyl-L-cysteinyl-[protein] + diphosphate. Catalyzes the transfer of a farnesyl or geranyl-geranyl moiety from farnesyl or geranyl-geranyl diphosphate to a cysteine at the fourth position from the C-terminus of several proteins having the C-terminal sequence Cys-aliphatic-aliphatic-X. The alpha(cwp1) subunit is thought to participate in a stable complex with the substrate. The beta(cpp1 or cwg2) subunits bind the peptide substrate. The sequence is that of Protein farnesyltransferase/geranylgeranyltransferase type-1 subunit alpha (cwp1) from Schizosaccharomyces pombe (strain 972 / ATCC 24843) (Fission yeast).